A 532-amino-acid chain; its full sequence is uncharacterized protein (532 aa).

Disordered stretches follow at residues 26 to 84 (KALR…TDSE), 97 to 129 (VFDE…QVGR), and 157 to 470 (SKAA…HTCQ). The segment covering 30–40 (GNNNGSSTSGG) has biased composition (low complexity). Over residues 67 to 80 (DIISQARRQVSLSR) the composition is skewed to polar residues. Over residues 157-181 (SKAAGEESKRHAHFESIQEEEKISE) the composition is skewed to basic and acidic residues. Low complexity predominate over residues 198 to 213 (IQSGSESSDSDSIIFD). The span at 237–249 (VEKKIEKPAVKEQ) shows a compositional bias: basic and acidic residues. 3 stretches are compositionally biased toward low complexity: residues 259-290 (PTPT…SASE), 298-315 (ESQV…SSSK), and 326-335 (SSSSSASTIS). The span at 347–356 (KTKKPDKKRA) shows a compositional bias: basic residues. 4 stretches are compositionally biased toward basic and acidic residues: residues 357–368 (KPDDIRQNKKPE), 389–403 (STVR…ESLK), 410–419 (KSSEKMEKPR), and 437–448 (RDAEREQDIERR). A compositionally biased stretch (basic residues) spans 449–461 (REKRARRFRSRRR).

This is an uncharacterized protein from Caenorhabditis elegans.